We begin with the raw amino-acid sequence, 249 residues long: tRNA (guanine-N(1)-)-methyltransferase (249 aa).

Residues Gly-113 and 133 to 138 (IGDYVL) contribute to the S-adenosyl-L-methionine site.

This sequence belongs to the RNA methyltransferase TrmD family. In terms of assembly, homodimer.

The protein resides in the cytoplasm. The enzyme catalyses guanosine(37) in tRNA + S-adenosyl-L-methionine = N(1)-methylguanosine(37) in tRNA + S-adenosyl-L-homocysteine + H(+). Functionally, specifically methylates guanosine-37 in various tRNAs. This is tRNA (guanine-N(1)-)-methyltransferase from Aeromonas hydrophila subsp. hydrophila (strain ATCC 7966 / DSM 30187 / BCRC 13018 / CCUG 14551 / JCM 1027 / KCTC 2358 / NCIMB 9240 / NCTC 8049).